The primary structure comprises 1072 residues: DNA-directed RNA polymerase subunit beta (1072 aa).

Belongs to the RNA polymerase beta chain family. In terms of assembly, in plastids the minimal PEP RNA polymerase catalytic core is composed of four subunits: alpha, beta, beta', and beta''. When a (nuclear-encoded) sigma factor is associated with the core the holoenzyme is formed, which can initiate transcription.

Its subcellular location is the plastid. The protein resides in the chloroplast. It carries out the reaction RNA(n) + a ribonucleoside 5'-triphosphate = RNA(n+1) + diphosphate. Functionally, DNA-dependent RNA polymerase catalyzes the transcription of DNA into RNA using the four ribonucleoside triphosphates as substrates. The protein is DNA-directed RNA polymerase subunit beta of Lobularia maritima (Sweet alyssum).